Consider the following 266-residue polypeptide: MIALALPAQDSGEFNPPGIEEMHLPAILPWGAADGFSKQMLLVILSVVIIATFFLLAARKQQLVPGKLQFAGEAAYGFVRNSIAKDIIGGKDFMKYVPLLFSLFFFILVNNIYGAIPLIQLPSFSHVGGAYVLAAIVYLTWIAIGVKKNGIKYFKLATVPTGVPVYILPIVIPIEIISNFLVRPVTHSLRLFATMLAGHLIVMIAGSGIEYLVMQENILLKGTSVLVLVGAIAMYMLEALIMALQAYVFTLLTAIYIEGALHADSH.

Transmembrane regions (helical) follow at residues 38 to 58 (KQML…LLAA), 99 to 119 (LLFS…IPLI), 126 to 146 (HVGG…AIGV), 162 to 182 (GVPV…NFLV), 191 to 211 (LFAT…GIEY), and 224 to 244 (SVLV…IMAL).

The protein belongs to the ATPase A chain family. As to quaternary structure, F-type ATPases have 2 components, CF(1) - the catalytic core - and CF(0) - the membrane proton channel. CF(1) has five subunits: alpha(3), beta(3), gamma(1), delta(1), epsilon(1). CF(0) has three main subunits: a(1), b(2) and c(9-12). The alpha and beta chains form an alternating ring which encloses part of the gamma chain. CF(1) is attached to CF(0) by a central stalk formed by the gamma and epsilon chains, while a peripheral stalk is formed by the delta and b chains.

It localises to the cell membrane. Functionally, key component of the proton channel; it plays a direct role in the translocation of protons across the membrane. The chain is ATP synthase subunit a from Arthrobacter sp. (strain FB24).